Here is a 335-residue protein sequence, read N- to C-terminus: Biotin synthase (335 aa).

In terms of domain architecture, Radical SAM core spans Y43–A269. Residues C61, C65, and C68 each coordinate [4Fe-4S] cluster. C104, C137, C197, and R267 together coordinate [2Fe-2S] cluster.

It belongs to the radical SAM superfamily. Biotin synthase family. As to quaternary structure, homodimer. The cofactor is [4Fe-4S] cluster. [2Fe-2S] cluster serves as cofactor.

It catalyses the reaction (4R,5S)-dethiobiotin + (sulfur carrier)-SH + 2 reduced [2Fe-2S]-[ferredoxin] + 2 S-adenosyl-L-methionine = (sulfur carrier)-H + biotin + 2 5'-deoxyadenosine + 2 L-methionine + 2 oxidized [2Fe-2S]-[ferredoxin]. The protein operates within cofactor biosynthesis; biotin biosynthesis; biotin from 7,8-diaminononanoate: step 2/2. Its function is as follows. Catalyzes the conversion of dethiobiotin (DTB) to biotin by the insertion of a sulfur atom into dethiobiotin via a radical-based mechanism. The polypeptide is Biotin synthase (Staphylococcus aureus (strain MSSA476)).